We begin with the raw amino-acid sequence, 527 residues long: EGF domain-specific O-linked N-acetylglucosamine transferase (527 aa).

The first 17 residues, 1–17 (MLMLFVFGVLLHEVSLS), serve as a signal peptide directing secretion. The Required for optimal activity motif lies at 295–297 (DYD). N-linked (GlcNAc...) asparagine glycosylation is present at Asn-354. The short motif at 524–527 (HDEL) is the Prevents secretion from ER element.

It belongs to the glycosyltransferase 61 family.

It localises to the endoplasmic reticulum lumen. The catalysed reaction is L-seryl-[protein] + UDP-N-acetyl-alpha-D-glucosamine = 3-O-(N-acetyl-beta-D-glucosaminyl)-L-seryl-[protein] + UDP + H(+). It carries out the reaction L-threonyl-[protein] + UDP-N-acetyl-alpha-D-glucosamine = 3-O-(N-acetyl-beta-D-glucosaminyl)-L-threonyl-[protein] + UDP + H(+). Its function is as follows. Catalyzes the transfer of a single N-acetylglucosamine from UDP-GlcNAc to a serine or threonine residue in extracellular proteins resulting in their modification with a beta-linked N-acetylglucosamine (O-GlcNAc). Specifically glycosylates the Thr residue located between the fifth and sixth conserved cysteines of folded EGF-like domains. This is EGF domain-specific O-linked N-acetylglucosamine transferase (EOGT) from Pan troglodytes (Chimpanzee).